A 562-amino-acid chain; its full sequence is AT-rich interactive domain-containing protein 1 (562 aa).

The 94-residue stretch at 43–136 (KELISLFRPL…YLDAFGRWLN (94 aa)) folds into the ARID domain. The 91-residue stretch at 358-448 (PCALVGSKFQ…KLELGPAFYM (91 aa)) folds into the ELM2 domain.

It localises to the nucleus. The chain is AT-rich interactive domain-containing protein 1 (ARID1) from Arabidopsis thaliana (Mouse-ear cress).